The chain runs to 361 residues: Ribosomal RNA large subunit methyltransferase M (361 aa).

Residues serine 190, 223 to 226 (CPGG), aspartate 242, aspartate 262, and aspartate 280 contribute to the S-adenosyl-L-methionine site. The active-site Proton acceptor is the lysine 309.

It belongs to the class I-like SAM-binding methyltransferase superfamily. RNA methyltransferase RlmE family. RlmM subfamily. Monomer.

It is found in the cytoplasm. It catalyses the reaction cytidine(2498) in 23S rRNA + S-adenosyl-L-methionine = 2'-O-methylcytidine(2498) in 23S rRNA + S-adenosyl-L-homocysteine + H(+). In terms of biological role, catalyzes the 2'-O-methylation at nucleotide C2498 in 23S rRNA. The sequence is that of Ribosomal RNA large subunit methyltransferase M from Actinobacillus pleuropneumoniae serotype 7 (strain AP76).